We begin with the raw amino-acid sequence, 175 residues long: uncharacterized protein (175 aa).

Over residues 35 to 56 (LIENSNYDNNNINNNNNNNNTD) the composition is skewed to low complexity. Residues 35-70 (LIENSNYDNNNINNNNNNNNTDNDNDNNNDNEPFYN) are disordered. The next 2 membrane-spanning stretches (helical) occupy residues 106 to 126 (ILSF…FFNY) and 132 to 152 (YFII…KSIF).

Its subcellular location is the membrane. This is an uncharacterized protein from Dictyostelium discoideum (Social amoeba).